The primary structure comprises 274 residues: Diaminopimelate epimerase (274 aa).

The substrate site is built by N11, Q44, and N64. C73 functions as the Proton donor in the catalytic mechanism. Residues 74–75 (GN), N157, N190, and 208–209 (ER) contribute to the substrate site. Catalysis depends on C217, which acts as the Proton acceptor. 218-219 (GS) lines the substrate pocket.

Belongs to the diaminopimelate epimerase family. In terms of assembly, homodimer.

It localises to the cytoplasm. It carries out the reaction (2S,6S)-2,6-diaminopimelate = meso-2,6-diaminopimelate. The protein operates within amino-acid biosynthesis; L-lysine biosynthesis via DAP pathway; DL-2,6-diaminopimelate from LL-2,6-diaminopimelate: step 1/1. In terms of biological role, catalyzes the stereoinversion of LL-2,6-diaminopimelate (L,L-DAP) to meso-diaminopimelate (meso-DAP), a precursor of L-lysine and an essential component of the bacterial peptidoglycan. This is Diaminopimelate epimerase from Pectobacterium atrosepticum (strain SCRI 1043 / ATCC BAA-672) (Erwinia carotovora subsp. atroseptica).